We begin with the raw amino-acid sequence, 310 residues long: Protein FAM153A (310 aa).

4 disordered regions span residues 39 to 58, 108 to 136, 156 to 184, and 250 to 297; these read LGVP…LCPP, QTNG…HTME, SYNG…DLEE, and TITG…KKSR. Residues 259–268 are compositionally biased toward low complexity; sequence SASPSSAPAE. A compositionally biased stretch (basic and acidic residues) spans 270 to 282; it reads ATEKTKVEEEVKT. Over residues 283–297 the composition is skewed to basic residues; that stretch reads RKPKKKTRKPSKKSR.

This sequence belongs to the FAM153 family.

The polypeptide is Protein FAM153A (FAM153A) (Homo sapiens (Human)).